A 215-amino-acid polypeptide reads, in one-letter code: UPF0323 lipoprotein jhp_0217 (215 aa).

The signal sequence occupies residues 1–27 (MKKPYRKISDYAIVGGLSALVMVSIVG). A lipid anchor (N-palmitoyl cysteine) is attached at C28. C28 carries the S-diacylglycerol cysteine lipid modification. Positions 158 to 169 (QRTYKSPQAYQR) are enriched in polar residues. Positions 158–215 (QRTYKSPQAYQRSQNSFSKSAPSASSMGTASKGQSGFFGSSRPTSSPAISSGTRGFNA) are disordered. Residues 170 to 183 (SQNSFSKSAPSASS) show a composition bias toward low complexity. Residues 184-195 (MGTASKGQSGFF) are compositionally biased toward polar residues. Residues 197-208 (SSRPTSSPAISS) show a composition bias toward low complexity.

It belongs to the UPF0323 family.

Its subcellular location is the cell membrane. This chain is UPF0323 lipoprotein jhp_0217, found in Helicobacter pylori (strain J99 / ATCC 700824) (Campylobacter pylori J99).